A 463-amino-acid chain; its full sequence is ATP-dependent protease ATPase subunit HslU (463 aa).

ATP contacts are provided by residues isoleucine 19, 61–66, aspartate 277, glutamate 341, and arginine 413; that span reads GVGKTE.

Belongs to the ClpX chaperone family. HslU subfamily. In terms of assembly, a double ring-shaped homohexamer of HslV is capped on each side by a ring-shaped HslU homohexamer. The assembly of the HslU/HslV complex is dependent on binding of ATP.

The protein resides in the cytoplasm. Its function is as follows. ATPase subunit of a proteasome-like degradation complex; this subunit has chaperone activity. The binding of ATP and its subsequent hydrolysis by HslU are essential for unfolding of protein substrates subsequently hydrolyzed by HslV. HslU recognizes the N-terminal part of its protein substrates and unfolds these before they are guided to HslV for hydrolysis. The chain is ATP-dependent protease ATPase subunit HslU from Bacillus cereus (strain AH187).